The sequence spans 888 residues: Alanine--tRNA ligase (888 aa).

4 residues coordinate Zn(2+): H573, H577, C676, and H680.

The protein belongs to the class-II aminoacyl-tRNA synthetase family. Requires Zn(2+) as cofactor.

Its subcellular location is the cytoplasm. The catalysed reaction is tRNA(Ala) + L-alanine + ATP = L-alanyl-tRNA(Ala) + AMP + diphosphate. Catalyzes the attachment of alanine to tRNA(Ala) in a two-step reaction: alanine is first activated by ATP to form Ala-AMP and then transferred to the acceptor end of tRNA(Ala). Also edits incorrectly charged Ser-tRNA(Ala) and Gly-tRNA(Ala) via its editing domain. The protein is Alanine--tRNA ligase of Corynebacterium glutamicum (strain R).